A 437-amino-acid chain; its full sequence is AA9 family lytic polysaccharide monooxygenase H (437 aa).

The N-terminal stretch at Met1–Ala21 is a signal peptide. His22 is a binding site for Cu(2+). Cysteines 64 and 193 form a disulfide. Asn67 and Asn79 each carry an N-linked (GlcNAc...) asparagine glycan. Residue His104 participates in Cu(2+) binding. 2 N-linked (GlcNAc...) asparagine glycosylation sites follow: Asn120 and Asn138. Positions 178 and 188 each coordinate O2. Cu(2+) is bound at residue Tyr190. N-linked (GlcNAc...) asparagine glycans are attached at residues Asn252 and Asn307. Residues Asp392–Gly437 enclose the Chitin-binding type-1 domain. 4 cysteine pairs are disulfide-bonded: Cys395-Cys412, Cys403-Cys418, Cys411-Cys425, and Cys429-Cys436.

This sequence belongs to the polysaccharide monooxygenase AA9 family. Requires Cu(2+) as cofactor.

Its subcellular location is the secreted. It carries out the reaction [(1-&gt;4)-beta-D-glucosyl]n+m + reduced acceptor + O2 = 4-dehydro-beta-D-glucosyl-[(1-&gt;4)-beta-D-glucosyl]n-1 + [(1-&gt;4)-beta-D-glucosyl]m + acceptor + H2O.. Lytic polysaccharide monooxygenase (LPMO) that depolymerizes crystalline and amorphous polysaccharides via the oxidation of scissile alpha- or beta-(1-4)-glycosidic bonds, yielding C1 and C4 oxidation products. Catalysis by LPMOs requires the reduction of the active-site copper from Cu(II) to Cu(I) by a reducing agent and H(2)O(2) or O(2) as a cosubstrate. This Botryotinia fuckeliana (strain B05.10) (Noble rot fungus) protein is AA9 family lytic polysaccharide monooxygenase H.